A 149-amino-acid polypeptide reads, in one-letter code: Endoribonuclease YbeY (149 aa).

3 residues coordinate Zn(2+): His-115, His-119, and His-125.

Belongs to the endoribonuclease YbeY family. Requires Zn(2+) as cofactor.

It localises to the cytoplasm. Functionally, single strand-specific metallo-endoribonuclease involved in late-stage 70S ribosome quality control and in maturation of the 3' terminus of the 16S rRNA. This chain is Endoribonuclease YbeY, found in Mycoplasmopsis pulmonis (strain UAB CTIP) (Mycoplasma pulmonis).